The chain runs to 618 residues: MKQSKLLIPTLREMPSDAQVISHALMVRAGYVRQVSAGIYAYLPLANRTIEKFKTIMREEFEKIGAVEMLAPALLTADLWRESGRYETYGEDLYKLKNRDNSDFILGPTHEETFTTLVRDAVKSYKQLPLNLYQIQSKYRDEKRPRNGLLRTREFIMKDGYSFHHNYEDLDVTYEDYRQAYEAIFTRAGLDFKGIIGDGGAMGGKDSQEFMAITPARTDLDRWVVLDKSIASMDAIPKEVLEEIKAELAAWMISGEDTIAYSTESSYAANLEMATNEYKPSSKVAAEDALAEVETPHCKTIDEVAAFLSVDETQTIKTLLFVADNEPVVALLVGNDHINTVKLKNYLAADFLEPASEEEARAFFGAGFGSLGPVNLAQGSRIVADRKVQNLTNAVAGANKDGFHVTGVNPGRDFQAEYVDIREVKEGEISPDGHGVLQFARGIEVGHIFKLGTRYSDSMGATILDENSRAVPIVMGCYGIGVSRILSAVIEQHARLFVNKTPKGDYRYAWGINFPKELAPFDVHLITVNVKDQVAQDLTAKLEADLMAKGYDVLTDDRNERVGSKFSDSDLIGLPIRVTVGKKAAEGIVEIKIKATGDSIEVNAENLIETLEILTKEH.

It belongs to the class-II aminoacyl-tRNA synthetase family. ProS type 1 subfamily. As to quaternary structure, homodimer.

It localises to the cytoplasm. The enzyme catalyses tRNA(Pro) + L-proline + ATP = L-prolyl-tRNA(Pro) + AMP + diphosphate. In terms of biological role, catalyzes the attachment of proline to tRNA(Pro) in a two-step reaction: proline is first activated by ATP to form Pro-AMP and then transferred to the acceptor end of tRNA(Pro). As ProRS can inadvertently accommodate and process non-cognate amino acids such as alanine and cysteine, to avoid such errors it has two additional distinct editing activities against alanine. One activity is designated as 'pretransfer' editing and involves the tRNA(Pro)-independent hydrolysis of activated Ala-AMP. The other activity is designated 'posttransfer' editing and involves deacylation of mischarged Ala-tRNA(Pro). The misacylated Cys-tRNA(Pro) is not edited by ProRS. In Streptococcus pyogenes serotype M2 (strain MGAS10270), this protein is Proline--tRNA ligase.